A 221-amino-acid chain; its full sequence is 3-dehydroquinate dehydratase (221 aa).

3-dehydroquinate-binding positions include 33-35 (EIR) and arginine 63. Catalysis depends on histidine 118, which acts as the Proton donor/acceptor. Lysine 144 serves as the catalytic Schiff-base intermediate with substrate. 3-dehydroquinate contacts are provided by arginine 181, threonine 200, and glutamine 204.

The protein belongs to the type-I 3-dehydroquinase family. As to quaternary structure, homodimer.

It catalyses the reaction 3-dehydroquinate = 3-dehydroshikimate + H2O. It functions in the pathway metabolic intermediate biosynthesis; chorismate biosynthesis; chorismate from D-erythrose 4-phosphate and phosphoenolpyruvate: step 3/7. Its function is as follows. Involved in the third step of the chorismate pathway, which leads to the biosynthesis of aromatic amino acids. Catalyzes the cis-dehydration of 3-dehydroquinate (DHQ) and introduces the first double bond of the aromatic ring to yield 3-dehydroshikimate. This is 3-dehydroquinate dehydratase from Methanothermobacter thermautotrophicus (strain ATCC 29096 / DSM 1053 / JCM 10044 / NBRC 100330 / Delta H) (Methanobacterium thermoautotrophicum).